The sequence spans 359 residues: Probable dual-specificity RNA methyltransferase RlmN (359 aa).

Glutamate 91 acts as the Proton acceptor in catalysis. Residues 97–335 enclose the Radical SAM core domain; the sequence is QHYGHSVCVT…CVVRQEHGTD (239 aa). A disulfide bridge connects residues cysteine 104 and cysteine 340. [4Fe-4S] cluster contacts are provided by cysteine 111, cysteine 115, and cysteine 118. Residues 163-164, serine 195, 218-220, and asparagine 296 contribute to the S-adenosyl-L-methionine site; these read GE and SLH. Catalysis depends on cysteine 340, which acts as the S-methylcysteine intermediate.

It belongs to the radical SAM superfamily. RlmN family. [4Fe-4S] cluster is required as a cofactor.

It is found in the cytoplasm. The catalysed reaction is adenosine(2503) in 23S rRNA + 2 reduced [2Fe-2S]-[ferredoxin] + 2 S-adenosyl-L-methionine = 2-methyladenosine(2503) in 23S rRNA + 5'-deoxyadenosine + L-methionine + 2 oxidized [2Fe-2S]-[ferredoxin] + S-adenosyl-L-homocysteine. The enzyme catalyses adenosine(37) in tRNA + 2 reduced [2Fe-2S]-[ferredoxin] + 2 S-adenosyl-L-methionine = 2-methyladenosine(37) in tRNA + 5'-deoxyadenosine + L-methionine + 2 oxidized [2Fe-2S]-[ferredoxin] + S-adenosyl-L-homocysteine. Functionally, specifically methylates position 2 of adenine 2503 in 23S rRNA and position 2 of adenine 37 in tRNAs. This is Probable dual-specificity RNA methyltransferase RlmN from Streptococcus pyogenes serotype M12 (strain MGAS2096).